The primary structure comprises 118 residues: Acidic phospholipase A2 PA-3 (118 aa).

7 cysteine pairs are disulfide-bonded: Cys-11/Cys-71, Cys-27/Cys-117, Cys-29/Cys-45, Cys-44/Cys-98, Cys-51/Cys-91, Cys-60/Cys-84, and Cys-78/Cys-89. Positions 28, 30, and 32 each coordinate Ca(2+). The active site involves His-48. Residue Asp-49 participates in Ca(2+) binding. Residue Asp-92 is part of the active site.

It belongs to the phospholipase A2 family. Group I subfamily. D49 sub-subfamily. Ca(2+) serves as cofactor. As to expression, expressed by the venom gland.

The protein localises to the secreted. The catalysed reaction is a 1,2-diacyl-sn-glycero-3-phosphocholine + H2O = a 1-acyl-sn-glycero-3-phosphocholine + a fatty acid + H(+). In terms of biological role, PLA2 catalyzes the calcium-dependent hydrolysis of the 2-acyl groups in 3-sn-phosphoglycerides. In Pseudechis australis (Mulga snake), this protein is Acidic phospholipase A2 PA-3.